A 275-amino-acid chain; its full sequence is Transmembrane protein 45A (275 aa).

5 consecutive transmembrane segments (helical) span residues 7–27 (HALPGTFFFIIGLWWCTKSIL), 51–71 (ILEGITIVGMALTGMAGEQFI), 100–120 (FFFGLLGVADILCFTISSLPV), 150–170 (IFVHQLLVLVVFLTGLVAFLE), and 218–238 (ILFLTICFCWHYAVTIVIVGM).

It belongs to the TMEM45 family.

The protein localises to the membrane. The chain is Transmembrane protein 45A (TMEM45A) from Homo sapiens (Human).